A 503-amino-acid chain; its full sequence is Aspartyl/glutamyl-tRNA(Asn/Gln) amidotransferase subunit B (503 aa).

This sequence belongs to the GatB/GatE family. GatB subfamily. Heterotrimer of A, B and C subunits.

It carries out the reaction L-glutamyl-tRNA(Gln) + L-glutamine + ATP + H2O = L-glutaminyl-tRNA(Gln) + L-glutamate + ADP + phosphate + H(+). The enzyme catalyses L-aspartyl-tRNA(Asn) + L-glutamine + ATP + H2O = L-asparaginyl-tRNA(Asn) + L-glutamate + ADP + phosphate + 2 H(+). Functionally, allows the formation of correctly charged Asn-tRNA(Asn) or Gln-tRNA(Gln) through the transamidation of misacylated Asp-tRNA(Asn) or Glu-tRNA(Gln) in organisms which lack either or both of asparaginyl-tRNA or glutaminyl-tRNA synthetases. The reaction takes place in the presence of glutamine and ATP through an activated phospho-Asp-tRNA(Asn) or phospho-Glu-tRNA(Gln). This is Aspartyl/glutamyl-tRNA(Asn/Gln) amidotransferase subunit B from Mycolicibacterium smegmatis (strain ATCC 700084 / mc(2)155) (Mycobacterium smegmatis).